We begin with the raw amino-acid sequence, 345 residues long: Platelet-derived growth factor C (345 aa).

The N-terminal stretch at 1–22 is a signal peptide; that stretch reads MLLLGLLLLTSALAGQRTGTRA. Residues 24–33 show a composition bias toward polar residues; that stretch reads SNLSSKLQLS. Residues 24–45 are disordered; it reads SNLSSKLQLSSDKEQNGVQDPR. A glycan (N-linked (GlcNAc...) asparagine) is linked at Asn-25. The span at 34-45 shows a compositional bias: basic and acidic residues; sequence SDKEQNGVQDPR. In terms of domain architecture, CUB spans 46–163; sequence HERVVTISGN…PGFCIHYSII (118 aa). Asn-55 is a glycosylation site (N-linked (GlcNAc...) asparagine). 4 disulfide bridges follow: Cys-104-Cys-124, Cys-250-Cys-294, Cys-280-Cys-335, and Cys-287-Cys-337.

Belongs to the PDGF/VEGF growth factor family. Homodimer; disulfide-linked. Interacts with PDGFRA homodimers, and with heterodimers formed by PDGFRA and PDGFRB. Interacts (via CUB domain) with PLAT (via kringle domain). Post-translationally, proteolytic removal of the N-terminal CUB domain releasing the core domain is necessary for unmasking the receptor-binding epitopes of the core domain. Cleavage after basic residues in the hinge region (region connecting the CUB and growth factor domains) gives rise to the receptor-binding form. Cleaved by PLAT and PLG. Sumoylated by SUMO1. In terms of processing, N-glycosylated. In terms of tissue distribution, mainly expressed in kidney, testis, liver, heart and brain (at protein level). Highly expressed in airway epithelium, interstitial cells and alveolar macrophages in the lung of mice overexpressing IL13. Expressed in the ovaries.

It is found in the cytoplasm. The protein resides in the cytosol. It localises to the secreted. The protein localises to the nucleus. Its subcellular location is the cytoplasmic granule. It is found in the cell membrane. Functionally, growth factor that plays an essential role in the regulation of embryonic development, cell proliferation, cell migration, survival and chemotaxis. Potent mitogen and chemoattractant for cells of mesenchymal origin. Required for normal skeleton formation during embryonic development, especially for normal development of the craniofacial skeleton and for normal development of the palate. Required for normal skin morphogenesis during embryonic development. Plays an important role in wound healing, where it appears to be involved in three stages: inflammation, proliferation and remodeling. Plays an important role in angiogenesis and blood vessel development. Involved in fibrotic processes, in which transformation of interstitial fibroblasts into myofibroblasts plus collagen deposition occurs. The CUB domain has mitogenic activity in coronary artery smooth muscle cells, suggesting a role beyond the maintenance of the latency of the PDGF domain. In the nucleus, PDGFC seems to have additional function. This Mus musculus (Mouse) protein is Platelet-derived growth factor C (Pdgfc).